Here is a 227-residue protein sequence, read N- to C-terminus: Response regulator protein TodT (227 aa).

The Response regulatory domain occupies Val-28 to Leu-142. Residue Asp-77 is modified to 4-aspartylphosphate. Positions Leu-158 to Lys-223 constitute an HTH luxR-type domain. The segment at residues Asn-182 to His-201 is a DNA-binding region (H-T-H motif).

Post-translationally, phosphorylated by TodS.

It localises to the cytoplasm. Its function is as follows. Member of the two-component regulatory system TodS/TodT involved in the regulation of toluene degradation. Phosphorylated TodT activates transcription of the tod operon (todXFC1C2BADEGIH). Binds specifically to a 6-bp palindromic DNA structure in the tod promoter region. The polypeptide is Response regulator protein TodT (todT) (Pseudomonas putida (strain ATCC 700007 / DSM 6899 / JCM 31910 / BCRC 17059 / LMG 24140 / F1)).